A 33-amino-acid chain; its full sequence is GLWSTIKQKGKEAAIAAAKAAGQAVLNSASEAL.

Leucine 33 bears the Leucine amide mark.

As to expression, expressed by the skin glands.

The protein resides in the secreted. Has antimicrobial activity. This Pithecopus hypochondrialis (Orange-legged leaf frog) protein is Dermaseptin-H8.